Reading from the N-terminus, the 245-residue chain is Ribosomal RNA small subunit methyltransferase G (245 aa).

Residues Gly-85, Phe-90, 108–110 (DST), 136–137 (AE), and Arg-155 each bind S-adenosyl-L-methionine.

The protein belongs to the methyltransferase superfamily. RNA methyltransferase RsmG family.

It is found in the cytoplasm. In terms of biological role, specifically methylates the N7 position of a guanine in 16S rRNA. The polypeptide is Ribosomal RNA small subunit methyltransferase G (Nostoc sp. (strain PCC 7120 / SAG 25.82 / UTEX 2576)).